The sequence spans 380 residues: 4-hydroxy-3-methylbut-2-en-1-yl diphosphate synthase (flavodoxin) (380 aa).

The [4Fe-4S] cluster site is built by Cys273, Cys276, Cys308, and Glu315.

Belongs to the IspG family. Requires [4Fe-4S] cluster as cofactor.

It catalyses the reaction (2E)-4-hydroxy-3-methylbut-2-enyl diphosphate + oxidized [flavodoxin] + H2O + 2 H(+) = 2-C-methyl-D-erythritol 2,4-cyclic diphosphate + reduced [flavodoxin]. It participates in isoprenoid biosynthesis; isopentenyl diphosphate biosynthesis via DXP pathway; isopentenyl diphosphate from 1-deoxy-D-xylulose 5-phosphate: step 5/6. Its function is as follows. Converts 2C-methyl-D-erythritol 2,4-cyclodiphosphate (ME-2,4cPP) into 1-hydroxy-2-methyl-2-(E)-butenyl 4-diphosphate. The sequence is that of 4-hydroxy-3-methylbut-2-en-1-yl diphosphate synthase (flavodoxin) from Leifsonia xyli subsp. xyli (strain CTCB07).